Reading from the N-terminus, the 194-residue chain is Adenine phosphoribosyltransferase (194 aa).

The protein belongs to the purine/pyrimidine phosphoribosyltransferase family. As to quaternary structure, homodimer.

The protein resides in the cytoplasm. It catalyses the reaction AMP + diphosphate = 5-phospho-alpha-D-ribose 1-diphosphate + adenine. It functions in the pathway purine metabolism; AMP biosynthesis via salvage pathway; AMP from adenine: step 1/1. Functionally, catalyzes a salvage reaction resulting in the formation of AMP, that is energically less costly than de novo synthesis. This chain is Adenine phosphoribosyltransferase, found in Albidiferax ferrireducens (strain ATCC BAA-621 / DSM 15236 / T118) (Rhodoferax ferrireducens).